Consider the following 256-residue polypeptide: Acetyl-coenzyme A carboxylase carboxyl transferase subunit beta 2 (256 aa).

One can recognise a CoA carboxyltransferase N-terminal domain in the interval methionine 1–alanine 256. Zn(2+)-binding residues include cysteine 5, cysteine 8, cysteine 24, and cysteine 27. The C4-type zinc finger occupies cysteine 5–cysteine 27.

This sequence belongs to the AccD/PCCB family. Acetyl-CoA carboxylase is a heterohexamer composed of biotin carboxyl carrier protein (AccB), biotin carboxylase (AccC) and two subunits each of ACCase subunit alpha (AccA) and ACCase subunit beta (AccD). Zn(2+) is required as a cofactor.

It localises to the cytoplasm. The catalysed reaction is N(6)-carboxybiotinyl-L-lysyl-[protein] + acetyl-CoA = N(6)-biotinyl-L-lysyl-[protein] + malonyl-CoA. It participates in lipid metabolism; malonyl-CoA biosynthesis; malonyl-CoA from acetyl-CoA: step 1/1. Component of the acetyl coenzyme A carboxylase (ACC) complex. Biotin carboxylase (BC) catalyzes the carboxylation of biotin on its carrier protein (BCCP) and then the CO(2) group is transferred by the transcarboxylase to acetyl-CoA to form malonyl-CoA. This chain is Acetyl-coenzyme A carboxylase carboxyl transferase subunit beta 2, found in Lachnospira eligens (strain ATCC 27750 / DSM 3376 / VPI C15-48 / C15-B4) (Eubacterium eligens).